The chain runs to 39 residues: Photosystem II reaction center protein J (39 aa).

The helical transmembrane segment at 9 to 29 (LWIIATFGGIAALTVVGLFIY) threads the bilayer.

It belongs to the PsbJ family. PSII is composed of 1 copy each of membrane proteins PsbA, PsbB, PsbC, PsbD, PsbE, PsbF, PsbH, PsbI, PsbJ, PsbK, PsbL, PsbM, PsbT, PsbX, PsbY, PsbZ, Psb30/Ycf12, at least 3 peripheral proteins of the oxygen-evolving complex and a large number of cofactors. It forms dimeric complexes.

Its subcellular location is the plastid. It localises to the chloroplast thylakoid membrane. In terms of biological role, one of the components of the core complex of photosystem II (PSII). PSII is a light-driven water:plastoquinone oxidoreductase that uses light energy to abstract electrons from H(2)O, generating O(2) and a proton gradient subsequently used for ATP formation. It consists of a core antenna complex that captures photons, and an electron transfer chain that converts photonic excitation into a charge separation. The polypeptide is Photosystem II reaction center protein J (Guillardia theta (Cryptophyte)).